We begin with the raw amino-acid sequence, 384 residues long: ATP phosphoribosyltransferase regulatory subunit (384 aa).

It belongs to the class-II aminoacyl-tRNA synthetase family. HisZ subfamily. Heteromultimer composed of HisG and HisZ subunits.

The protein localises to the cytoplasm. Its pathway is amino-acid biosynthesis; L-histidine biosynthesis; L-histidine from 5-phospho-alpha-D-ribose 1-diphosphate: step 1/9. Required for the first step of histidine biosynthesis. May allow the feedback regulation of ATP phosphoribosyltransferase activity by histidine. The protein is ATP phosphoribosyltransferase regulatory subunit of Paracidovorax citrulli (strain AAC00-1) (Acidovorax citrulli).